Reading from the N-terminus, the 365-residue chain is 2-aminoethylphosphonate--pyruvate transaminase (365 aa).

Lys194 carries the post-translational modification N6-(pyridoxal phosphate)lysine.

The protein belongs to the class-V pyridoxal-phosphate-dependent aminotransferase family. PhnW subfamily. Homodimer. Requires pyridoxal 5'-phosphate as cofactor.

It carries out the reaction (2-aminoethyl)phosphonate + pyruvate = phosphonoacetaldehyde + L-alanine. In terms of biological role, involved in phosphonate degradation. In Bacillus cereus (strain ATCC 14579 / DSM 31 / CCUG 7414 / JCM 2152 / NBRC 15305 / NCIMB 9373 / NCTC 2599 / NRRL B-3711), this protein is 2-aminoethylphosphonate--pyruvate transaminase.